Reading from the N-terminus, the 384-residue chain is Chaperone protein DnaJ (384 aa).

Positions 6 to 71 (DYYEVLGISK…TKRKTYDQFG (66 aa)) constitute a J domain. Residues 141-223 (GKKMSIKVNR…CHGTGNTRKV (83 aa)) form a CR-type zinc finger. Residues cysteine 154, cysteine 157, cysteine 171, cysteine 174, cysteine 197, cysteine 200, cysteine 211, and cysteine 214 each contribute to the Zn(2+) site. CXXCXGXG motif repeat units follow at residues 154–161 (CEECNGTG), 171–178 (CSTCNGTG), 197–204 (CSACNGTG), and 211–218 (CSKCHGTG).

This sequence belongs to the DnaJ family. Homodimer. It depends on Zn(2+) as a cofactor.

It localises to the cytoplasm. Participates actively in the response to hyperosmotic and heat shock by preventing the aggregation of stress-denatured proteins and by disaggregating proteins, also in an autonomous, DnaK-independent fashion. Unfolded proteins bind initially to DnaJ; upon interaction with the DnaJ-bound protein, DnaK hydrolyzes its bound ATP, resulting in the formation of a stable complex. GrpE releases ADP from DnaK; ATP binding to DnaK triggers the release of the substrate protein, thus completing the reaction cycle. Several rounds of ATP-dependent interactions between DnaJ, DnaK and GrpE are required for fully efficient folding. Also involved, together with DnaK and GrpE, in the DNA replication of plasmids through activation of initiation proteins. This chain is Chaperone protein DnaJ, found in Clostridioides difficile (strain 630) (Peptoclostridium difficile).